Consider the following 281-residue polypeptide: Probable endonuclease 4 (281 aa).

H69, H109, E145, D179, H182, H216, D229, H231, and E261 together coordinate Zn(2+).

Belongs to the AP endonuclease 2 family. Requires Zn(2+) as cofactor.

The enzyme catalyses Endonucleolytic cleavage to 5'-phosphooligonucleotide end-products.. Its function is as follows. Endonuclease IV plays a role in DNA repair. It cleaves phosphodiester bonds at apurinic or apyrimidinic (AP) sites, generating a 3'-hydroxyl group and a 5'-terminal sugar phosphate. This is Probable endonuclease 4 from Chlorobaculum tepidum (strain ATCC 49652 / DSM 12025 / NBRC 103806 / TLS) (Chlorobium tepidum).